A 338-amino-acid polypeptide reads, in one-letter code: RNA 3'-terminal phosphate cyclase (338 aa).

Residues Q103 and 283-287 each bind ATP; that span reads YLADQ. H308 functions as the Tele-AMP-histidine intermediate in the catalytic mechanism.

It belongs to the RNA 3'-terminal cyclase family. Type 1 subfamily.

It is found in the cytoplasm. The catalysed reaction is a 3'-end 3'-phospho-ribonucleotide-RNA + ATP = a 3'-end 2',3'-cyclophospho-ribonucleotide-RNA + AMP + diphosphate. In terms of biological role, catalyzes the conversion of 3'-phosphate to a 2',3'-cyclic phosphodiester at the end of RNA. The mechanism of action of the enzyme occurs in 3 steps: (A) adenylation of the enzyme by ATP; (B) transfer of adenylate to an RNA-N3'P to produce RNA-N3'PP5'A; (C) and attack of the adjacent 2'-hydroxyl on the 3'-phosphorus in the diester linkage to produce the cyclic end product. The biological role of this enzyme is unknown but it is likely to function in some aspects of cellular RNA processing. This Escherichia coli (strain K12 / MC4100 / BW2952) protein is RNA 3'-terminal phosphate cyclase.